The sequence spans 502 residues: Regulator of hypoxia-inducible factor 1 (502 aa).

11 helical membrane-spanning segments follow: residues 54 to 74 (LLAW…VFSC), 92 to 112 (LDVL…NHTG), 138 to 158 (IFGA…VLSG), 188 to 208 (LAPS…NALL), 241 to 261 (MGYL…PIFL), 272 to 292 (MALT…YCTA), 335 to 355 (GPFL…YIMV), 367 to 387 (LIVA…PNAG), 396 to 416 (TAVF…ALYF), 437 to 457 (AYLL…LQAA), and 465 to 485 (LVLP…YLFI).

In terms of tissue distribution, expressed in intestine, some sensory neurons in the head, body wall muscles and socket cells.

The protein localises to the endoplasmic reticulum membrane. Functionally, involved in the response to variation in environmental oxygen levels by inhibiting hif-1-mediated gene transcription in a vhl-1-independent manner. Plays a role in susceptibility to killing mediated by P.aeruginosa and by pore-forming toxins produced by B.thuringiensis. Probably by preventing hif-1 transcriptional activity, regulates behavioral responses, such as locomotion speed following acute reoxygenation. Plays a role in normal egg-laying probably by regulating spermatogenesis and in body morphogenesis. This is Regulator of hypoxia-inducible factor 1 from Caenorhabditis elegans.